Here is a 296-residue protein sequence, read N- to C-terminus: MMFKQYLQVTKPGIIFGNLISVIGGFLLASKGSIDYPLFIYTLVGVSLVVASGCVFNNYIDRDIDRKMERTKNRVLVKGLISPAVSLVYATLLGIAGFMLLWFGANPLACWLGVMGFVVYVGVYSLYMKRHSVYGTLIGSLSGAAPPVIGYCAVTGEFDSGAAILLAIFSLWQMPHSYAIAIFRFKDYQAANIPVLPVVKGISVAKNHITLYIIAFAVATLMLSLGGYAGYKYLVVAAAVSVWWLGMALRGYKVADDRIWARKLFGFSIIAITALSVMMSVDFMVPDSHTLLAAVW.

The Cytoplasmic segment spans residues Met-1–Val-9. A helical transmembrane segment spans residues Thr-10–Leu-28. The Periplasmic segment spans residues Ala-29 to Pro-37. The helical transmembrane segment at Leu-38–Phe-56 threads the bilayer. The Cytoplasmic portion of the chain corresponds to Asn-57–Lys-78. Residues Gly-79–Gly-97 traverse the membrane as a helical segment. Over Phe-98–Pro-107 the chain is Periplasmic. A helical transmembrane segment spans residues Leu-108–Leu-126. Topologically, residues Tyr-127–Pro-197 are cytoplasmic. Residues Val-198–Phe-216 traverse the membrane as a helical segment. At Ala-217–Tyr-228 the chain is on the periplasmic side. Residues Ala-229 to Met-247 traverse the membrane as a helical segment. Residues Ala-248–Ser-268 lie on the Cytoplasmic side of the membrane. Residues Ile-269–Asp-287 form a helical membrane-spanning segment. Topologically, residues Ser-288–Trp-296 are periplasmic.

This sequence belongs to the UbiA prenyltransferase family. Protoheme IX farnesyltransferase subfamily.

Its subcellular location is the cell inner membrane. It carries out the reaction heme b + (2E,6E)-farnesyl diphosphate + H2O = Fe(II)-heme o + diphosphate. It functions in the pathway porphyrin-containing compound metabolism; heme O biosynthesis; heme O from protoheme: step 1/1. Its function is as follows. Converts heme B (protoheme IX) to heme O by substitution of the vinyl group on carbon 2 of heme B porphyrin ring with a hydroxyethyl farnesyl side group. In Escherichia coli O139:H28 (strain E24377A / ETEC), this protein is Protoheme IX farnesyltransferase.